A 324-amino-acid polypeptide reads, in one-letter code: UDP-N-acetylenolpyruvoylglucosamine reductase (324 aa).

Residues 36 to 203 form the FAD-binding PCMH-type domain; sequence FRAGGLAELM…THAIFEGYAE (168 aa). Arg-183 is an active-site residue. Residue Ser-232 is the Proton donor of the active site. Glu-302 is a catalytic residue.

This sequence belongs to the MurB family. FAD serves as cofactor.

Its subcellular location is the cytoplasm. The enzyme catalyses UDP-N-acetyl-alpha-D-muramate + NADP(+) = UDP-N-acetyl-3-O-(1-carboxyvinyl)-alpha-D-glucosamine + NADPH + H(+). It functions in the pathway cell wall biogenesis; peptidoglycan biosynthesis. Cell wall formation. This is UDP-N-acetylenolpyruvoylglucosamine reductase from Rhizobium meliloti (strain 1021) (Ensifer meliloti).